Reading from the N-terminus, the 952-residue chain is Leucine--tRNA ligase (952 aa).

Positions 66–77 match the 'HIGH' region motif; that stretch reads PYPSGAGLHVGH. The short motif at 722-726 is the 'KMSKS' region element; sequence KMGKS. Lys-725 is a binding site for ATP.

Belongs to the class-I aminoacyl-tRNA synthetase family.

It is found in the cytoplasm. The catalysed reaction is tRNA(Leu) + L-leucine + ATP = L-leucyl-tRNA(Leu) + AMP + diphosphate. The chain is Leucine--tRNA ligase from Corynebacterium glutamicum (strain ATCC 13032 / DSM 20300 / JCM 1318 / BCRC 11384 / CCUG 27702 / LMG 3730 / NBRC 12168 / NCIMB 10025 / NRRL B-2784 / 534).